The following is a 95-amino-acid chain: Small ribosomal subunit protein uS17 (95 aa).

It belongs to the universal ribosomal protein uS17 family. Part of the 30S ribosomal subunit.

In terms of biological role, one of the primary rRNA binding proteins, it binds specifically to the 5'-end of 16S ribosomal RNA. The polypeptide is Small ribosomal subunit protein uS17 (Mycoplasmopsis synoviae (strain 53) (Mycoplasma synoviae)).